Reading from the N-terminus, the 155-residue chain is Cytochrome c-type biogenesis protein CcmE (155 aa).

Topologically, residues 1–8 (MNPVRKRR) are cytoplasmic. The helical; Signal-anchor for type II membrane protein transmembrane segment at 9–29 (LFIVLAILAGVGAAVALALSA) threads the bilayer. Residues 30–155 (LQQNINLFYT…YENGKPGGAQ (126 aa)) lie on the Periplasmic side of the membrane. Heme contacts are provided by histidine 124 and tyrosine 128.

This sequence belongs to the CcmE/CycJ family.

It localises to the cell inner membrane. In terms of biological role, heme chaperone required for the biogenesis of c-type cytochromes. Transiently binds heme delivered by CcmC and transfers the heme to apo-cytochromes in a process facilitated by CcmF and CcmH. The chain is Cytochrome c-type biogenesis protein CcmE from Azotobacter vinelandii (strain DJ / ATCC BAA-1303).